A 211-amino-acid polypeptide reads, in one-letter code: Probable superoxide dismutase [Mn], mitochondrial (211 aa).

Mn(2+)-binding residues include His36, His84, Asp173, and His177.

It belongs to the iron/manganese superoxide dismutase family. In terms of assembly, homotetramer. It depends on Mn(2+) as a cofactor.

The protein resides in the mitochondrion matrix. It catalyses the reaction 2 superoxide + 2 H(+) = H2O2 + O2. Functionally, destroys superoxide anion radicals which are normally produced within the cells and which are toxic to biological systems. This chain is Probable superoxide dismutase [Mn], mitochondrial, found in Debaryomyces hansenii (strain ATCC 36239 / CBS 767 / BCRC 21394 / JCM 1990 / NBRC 0083 / IGC 2968) (Yeast).